A 356-amino-acid polypeptide reads, in one-letter code: Alternative oxidase, mitochondrial (356 aa).

Residues 152 to 172 (VIRFIFLETVAGVPGMVGGML) traverse the membrane as a helical segment. Fe cation is bound by residues E159, E198, and H201. The helical transmembrane segment at 217 to 237 (LMVLGAQGVFFNGFFISYLIS) threads the bilayer. Fe cation is bound by residues E249, E304, and H307. Residues 330–356 (YDNPEAPHPTKSAEIVKPTGWERDEVI) form a disordered region.

It belongs to the alternative oxidase family. It depends on Fe cation as a cofactor.

It localises to the mitochondrion inner membrane. Its function is as follows. Catalyzes cyanide-resistant oxygen consumption. May increase respiration when the cytochrome respiratory pathway is restricted, or in response to low temperatures. The chain is Alternative oxidase, mitochondrial (AOX1) from Ajellomyces capsulatus (Darling's disease fungus).